Reading from the N-terminus, the 66-residue chain is uncharacterized protein (66 aa).

This is an uncharacterized protein from Homo sapiens (Human).